Reading from the N-terminus, the 396-residue chain is Argininosuccinate synthase (396 aa).

ATP-binding positions include 10-18 and Ala-37; that span reads AYSGGLDTS. The L-citrulline site is built by Tyr-88 and Ser-93. Gly-118 is a binding site for ATP. Thr-120, Asn-124, and Asp-125 together coordinate L-aspartate. Asn-124 provides a ligand contact to L-citrulline. Positions 128, 176, 185, 261, and 273 each coordinate L-citrulline.

The protein belongs to the argininosuccinate synthase family. Type 1 subfamily. As to quaternary structure, homotetramer.

Its subcellular location is the cytoplasm. It catalyses the reaction L-citrulline + L-aspartate + ATP = 2-(N(omega)-L-arginino)succinate + AMP + diphosphate + H(+). Its pathway is amino-acid biosynthesis; L-arginine biosynthesis; L-arginine from L-ornithine and carbamoyl phosphate: step 2/3. The sequence is that of Argininosuccinate synthase from Nitratidesulfovibrio vulgaris (strain DP4) (Desulfovibrio vulgaris).